The following is a 912-amino-acid chain: Multiple C2 and transmembrane domain-containing protein (912 aa).

A compositionally biased stretch (low complexity) spans 1–33; sequence MSRIQYVDQVDQVELDQQQQPGSSSTVSGSTPP. Disordered stretches follow at residues 1–80 and 145–165; these read MSRI…KRAK and SSEGSSVTHSPRHRSTTIGGS. Residues 38 to 49 show a composition bias toward polar residues; sequence PHGSPSLQQSQR. 3 C2 domains span residues 218 to 337, 371 to 493, and 522 to 637; these read QANE…HLQL, RNSK…HLML, and ERYK…TLKD. Positions 252, 258, 305, 307, and 313 each coordinate Ca(2+). Ca(2+)-binding residues include Asp-553, Asp-559, Asp-605, and Asp-607. 2 helical membrane passes run 729 to 749 and 826 to 846; these read IVACVYGDLETVPLVLLLIIL and LTWLAVVLLLGAILVLHFVPL. Positions 887–912 are disordered; sequence NQYRELPPSAPTDQTRNNPKKKLKGS.

Ca(2+) serves as cofactor. In terms of tissue distribution, motor neurons (at protein level).

The protein localises to the endoplasmic reticulum membrane. In terms of biological role, calcium sensor which is essential for the stabilization of normal baseline neurotransmitter release and for the induction and long-term maintenance of presynaptic homeostatic plasticity. The protein is Multiple C2 and transmembrane domain-containing protein of Drosophila melanogaster (Fruit fly).